Here is a 203-residue protein sequence, read N- to C-terminus: Large ribosomal subunit protein bL25 (203 aa).

It belongs to the bacterial ribosomal protein bL25 family. CTC subfamily. As to quaternary structure, part of the 50S ribosomal subunit; part of the 5S rRNA/L5/L18/L25 subcomplex. Contacts the 5S rRNA. Binds to the 5S rRNA independently of L5 and L18.

Functionally, this is one of the proteins that binds to the 5S RNA in the ribosome where it forms part of the central protuberance. This is Large ribosomal subunit protein bL25 from Dechloromonas aromatica (strain RCB).